Consider the following 70-residue polypeptide: Prokaryotic ubiquitin-like protein UBact (70 aa).

2 stretches are compositionally biased toward basic and acidic residues: residues 1 to 15 (MPDQRQQERSRRKQG) and 24 to 50 (TRHDPPPSEQESPVRRMLRDLRERDPG). The interval 1–70 (MPDQRQQERS…RQQRREQSGE (70 aa)) is disordered. Glu-70 participates in a covalent cross-link: Isoglutamyl lysine isopeptide (Glu-Lys) (interchain with K-? in acceptor proteins).

It belongs to the ubiquitin-like protein UBact family.

Its function is as follows. May function as a protein modifier covalently attached to lysine residues of substrate proteins. This may serve to target the modified proteins for degradation by proteasomes. In Terrybacteria sp. (strain RIFCSPHIGHO2_01_FULL_58_15), this protein is Prokaryotic ubiquitin-like protein UBact.